The following is a 404-amino-acid chain: Cysteine desulfurase IscS (404 aa).

Residues 75-76 (AT), N155, Q183, and 203-205 (SAH) each bind pyridoxal 5'-phosphate. N6-(pyridoxal phosphate)lysine is present on K206. T243 contacts pyridoxal 5'-phosphate. The Cysteine persulfide intermediate role is filled by C328. C328 lines the [2Fe-2S] cluster pocket.

It belongs to the class-V pyridoxal-phosphate-dependent aminotransferase family. NifS/IscS subfamily. As to quaternary structure, homodimer. Forms a heterotetramer with IscU, interacts with other sulfur acceptors. It depends on pyridoxal 5'-phosphate as a cofactor.

It is found in the cytoplasm. The enzyme catalyses (sulfur carrier)-H + L-cysteine = (sulfur carrier)-SH + L-alanine. The protein operates within cofactor biosynthesis; iron-sulfur cluster biosynthesis. Its function is as follows. Master enzyme that delivers sulfur to a number of partners involved in Fe-S cluster assembly, tRNA modification or cofactor biosynthesis. Catalyzes the removal of elemental sulfur atoms from cysteine to produce alanine. Functions as a sulfur delivery protein for Fe-S cluster synthesis onto IscU, an Fe-S scaffold assembly protein, as well as other S acceptor proteins. In Pseudomonas putida (strain ATCC 700007 / DSM 6899 / JCM 31910 / BCRC 17059 / LMG 24140 / F1), this protein is Cysteine desulfurase IscS.